Consider the following 121-residue polypeptide: Nitrogenase-stabilizing/protective protein NifW (121 aa).

This sequence belongs to the NifW family. In terms of assembly, homotrimer; associates with NifD.

May protect the nitrogenase Fe-Mo protein from oxidative damage. The polypeptide is Nitrogenase-stabilizing/protective protein NifW (Methylacidiphilum infernorum (isolate V4) (Methylokorus infernorum (strain V4))).